The following is a 78-amino-acid chain: Putative membrane protein insertion efficiency factor (78 aa).

This sequence belongs to the UPF0161 family.

It is found in the cell membrane. Its function is as follows. Could be involved in insertion of integral membrane proteins into the membrane. This is Putative membrane protein insertion efficiency factor from Bacillus cereus (strain G9842).